The primary structure comprises 284 residues: Type II methyltransferase M1.DpnII (284 aa).

S-adenosyl-L-methionine is bound by residues W17, K21, G46, D62, D177, F178, and D194.

It belongs to the N(4)/N(6)-methyltransferase family. Monomer. Homodimer.

It catalyses the reaction a 2'-deoxyadenosine in DNA + S-adenosyl-L-methionine = an N(6)-methyl-2'-deoxyadenosine in DNA + S-adenosyl-L-homocysteine + H(+). Its function is as follows. An alpha subtype methylase that recognizes the double-stranded sequence 5'-GATC-3', methylates A-2 on both strands, and protects the DNA from cleavage by the DpnII endonuclease. In Streptococcus pneumoniae, this protein is Type II methyltransferase M1.DpnII.